The sequence spans 334 residues: Nucleoid-associated protein PMI0825 (334 aa).

This sequence belongs to the YejK family.

It is found in the cytoplasm. The protein localises to the nucleoid. The protein is Nucleoid-associated protein PMI0825 of Proteus mirabilis (strain HI4320).